Consider the following 35-residue polypeptide: uncharacterized protein (35 aa).

This is an uncharacterized protein from Bacillus subtilis (strain 168).